The following is a 901-amino-acid chain: Serine/threonine-protein kinase-like protein CR4 (901 aa).

A signal peptide spans 1–22 (MDIVPVVALCCCLVLLPSWAYG). Repeat copies occupy residues 31-66 (VSYG…GAPS), 70-105 (FVGV…GVPQ), 123-158 (LCAL…TVTG), 160-193 (VSAI…GVIG), 201-234 (FQSI…QMST), 251-285 (MVSV…TLAP), and 290-328 (VYAI…AVSP). The tract at residues 31–328 (VSYGEDGPVF…PLALPMAVSP (298 aa)) is 7 X 36 AA repeats. Asn149 and Asn177 each carry an N-linked (GlcNAc...) asparagine glycan. Asn280 carries an N-linked (GlcNAc...) asparagine glycan. The stretch at 335–389 (SCSHGYYEYANHGEVGSGSKTCKPANSRLCLPCSVGCPDDSYESSPCNATADRVC) is one TNFR-Cys repeat. 3 disulfides stabilise this stretch: Cys336/Cys364, Cys367/Cys381, and Cys371/Cys389. An N-linked (GlcNAc...) asparagine glycan is attached at Asn382. The chain crosses the membrane as a helical span at residues 423–443 (IFVAEIAFAVILVFSVTAIAC). A Protein kinase domain is found at 504-781 (FSEDSQVGKG…KVTTALERAL (278 aa)). ATP is bound by residues 510–518 (VGKGSFSCV) and Lys532. Asp633 serves as the catalytic Proton acceptor. The tract at residues 845–901 (VTSSQRRKSSASEADMDGRTTTDGRNVGSSIGDGLRSLEEEISPASPQENLYLQHNF) is disordered. The segment covering 889 to 901 (ASPQENLYLQHNF) has biased composition (polar residues).

The protein belongs to the protein kinase superfamily. Ser/Thr protein kinase family. In terms of assembly, homodimer. Post-translationally, autophosphorylated. As to expression, specifically expressed in the epidermal cells of paleas and lemmas.

The protein resides in the cell membrane. It is found in the endosome. It localises to the multivesicular body membrane. It catalyses the reaction L-seryl-[protein] + ATP = O-phospho-L-seryl-[protein] + ADP + H(+). It carries out the reaction L-threonyl-[protein] + ATP = O-phospho-L-threonyl-[protein] + ADP + H(+). Receptor protein kinase. Could play a role in a differentiation signal. Controls formative cell division in meristems. Regulates epidermal cell differentiation in many organs. During floral organogenesis, required to maintain the interlocking of the palea and lemma, and fertility. Triggers culm elongation. The sequence is that of Serine/threonine-protein kinase-like protein CR4 from Oryza sativa subsp. japonica (Rice).